The following is a 221-amino-acid chain: Large ribosomal subunit protein uL3 (221 aa).

This sequence belongs to the universal ribosomal protein uL3 family. Part of the 50S ribosomal subunit. Forms a cluster with proteins L14 and L19.

In terms of biological role, one of the primary rRNA binding proteins, it binds directly near the 3'-end of the 23S rRNA, where it nucleates assembly of the 50S subunit. The chain is Large ribosomal subunit protein uL3 from Chlamydia trachomatis serovar L2 (strain ATCC VR-902B / DSM 19102 / 434/Bu).